A 328-amino-acid polypeptide reads, in one-letter code: MLEDYYPSTTSYYHGGIDDDLYTAKWGMVMTFLDLNDSSLTPFEGTHFALIGFKSDKGVYINNGRVGAVESPAAIRTQLAKFPWHLGNQVMVYDVGNIDGPNRSLEQLQNSLSKAIKRMCDLNLKPIVLGGGHETAYGHYLGLRQSLSPSDDLAVINMDAHFDLRPYDQTGPNSGTGFRQMFDDAVADKRLFKYFVLGIQEHNNNLFLFDFVAKSKGIQFLTGQDIYQMGHQKVCRAIDRFLEGQERVYLTIDMDCFSVGAAPGVSAIQSLGVDPNLAVLVLQHIAASGKLVGFDVVEVSPPHDIDNHTANLAATFIFYLVQIMAQHS.

Residues histidine 133, aspartate 159, histidine 161, aspartate 163, aspartate 253, and aspartate 255 each contribute to the Mn(2+) site.

This sequence belongs to the arginase family. It depends on Mn(2+) as a cofactor.

It carries out the reaction N-formimidoyl-L-glutamate + H2O = formamide + L-glutamate. Its pathway is amino-acid degradation; L-histidine degradation into L-glutamate; L-glutamate from N-formimidoyl-L-glutamate (hydrolase route): step 1/1. Its function is as follows. Catalyzes the conversion of N-formimidoyl-L-glutamate to L-glutamate and formamide. This Streptococcus pyogenes serotype M1 protein is Formimidoylglutamase.